Here is a 2014-residue protein sequence, read N- to C-terminus: Leucine-rich repeat serine/threonine-protein kinase 1 (2014 aa).

ANK repeat units lie at residues 51–81 (QCPS…CEES), 86–116 (EKGQ…ELPT), 119–148 (TDDN…GPCT), 152–182 (LLNW…DPEN), and 193–222 (IVRL…YFCS). LRR repeat units lie at residues 279–300 (QITE…IPWG), 303–324 (NLKK…QSSD), 330–351 (RLLE…FLHL), 353–374 (KLQK…ENAT), 381–402 (KLQE…FMHS), 405–426 (SLTS…WSCP), 427–447 (LKCC…MAVF), 451–472 (HLRD…LFQL), 474–495 (ALMF…EKWT), 498–519 (QLKT…LKTK), 549–570 (SLEV…VCLL), 572–594 (NLSE…LGQL), and 596–617 (NLWQ…VRKE). In terms of domain architecture, Roc spans 632 to 826 (KAEKCKLMKM…QLIFHVTCNM (195 aa)). Residues Pro647, Arg648, Gly650, Lys651, Ser652, Thr653, Glu670, His758, Asp760, Cys806, and Lys807 each coordinate GDP. Residues 840 to 1237 (GRLIPRSYIS…PARLFLENSK (398 aa)) form the COR domain. Thr1061 carries the phosphothreonine modification. A phosphoserine mark is found at Ser1064 and Ser1074. Thr1075 is subject to Phosphothreonine. One can recognise a Protein kinase domain in the interval 1242-1525 (EGENSILGQG…VVSQMKDPTF (284 aa)). Residues 1248–1256 (LGQGGSGTV) and Lys1270 contribute to the ATP site. Catalysis depends on Asp1386, which acts as the Proton acceptor. WD repeat units lie at residues 1539–1579 (AFFS…RMTC), 1582–1622 (MKLS…QALD), 1623–1668 (TPAV…SCSY), 1693–1729 (VKAM…RLEP), 1730–1778 (YAAP…YFCG), 1779–1948 (DPNP…AVLK), and 1950–1986 (RELN…AVWR). The interval 1791 to 1906 (PSVLETPGSH…MDGETFSQHL (116 aa)) is WD40 loop; involved in dimer stabilization. Residues 1839–1895 (SMSSYSSSPPHQDPRSPSSLPSSLTSYSSVPFSANYEDSDRLQEPSVTSDRTEHDLS) are disordered. Positions 1853–1871 (RSPSSLPSSLTSYSSVPFS) are enriched in low complexity.

This sequence belongs to the protein kinase superfamily. TKL Ser/Thr protein kinase family. ROCO subfamily. Homodimer. The homodimer is autoinhibited and stabilized by its N-terminal residues and ANK repeats. Interacts with CSK. Mg(2+) serves as cofactor. Mn(2+) is required as a cofactor. In terms of processing, autophosphorylated. Autophosphorylation in inhibited in its dimeric state. Phosphorylated by protein kinase C isozymes PRKCA, PRKCB, PRKCG, PRKCE, PRKCZ and PRKCT at Ser-1064, Ser-1074 and Thr-1075. Phosphorylation at these residues activates the kinase activity of LRRK1 to phosphorylate RAB7A. Expressed in osteoclasts and bone marrow stromal cells.

The protein resides in the cytoplasm. It is found in the cell membrane. It carries out the reaction L-seryl-[protein] + ATP = O-phospho-L-seryl-[protein] + ADP + H(+). The catalysed reaction is L-threonyl-[protein] + ATP = O-phospho-L-threonyl-[protein] + ADP + H(+). Its activity is regulated as follows. Activated by phosphorylation by PKC. Binds both GTP and GDP; binding of GTP stimulates kinase activity. Sterically autoinhibited in its dimeric state. Its function is as follows. Serine/threonine-protein kinase which phosphorylates RAB proteins involved in intracellular trafficking. Phosphorylates RAB7A; this activity is dependent on protein kinase C (PKC) activation. Plays a role in the negative regulation of bone mass, acting through the maturation of osteoclasts. This Mus musculus (Mouse) protein is Leucine-rich repeat serine/threonine-protein kinase 1.